We begin with the raw amino-acid sequence, 245 residues long: NAD-dependent protein deacylase (245 aa).

The 245-residue stretch at 1–245 (MEAVWESARI…RLSRAMGIDI (245 aa)) folds into the Deacetylase sirtuin-type domain. 22 to 41 (GAGISAESGIPTFRGKDGLW) contributes to the NAD(+) binding site. Tyr-66 and Arg-69 together coordinate substrate. 100–103 (QNVD) provides a ligand contact to NAD(+). Residue His-118 is the Proton acceptor of the active site. Residues Cys-126, Cys-129, Cys-146, and Cys-149 each contribute to the Zn(2+) site. NAD(+) is bound by residues 186-188 (GTS), 212-214 (NPE), and Met-241.

It belongs to the sirtuin family. Class III subfamily. Zn(2+) is required as a cofactor.

It localises to the cytoplasm. The enzyme catalyses N(6)-acetyl-L-lysyl-[protein] + NAD(+) + H2O = 2''-O-acetyl-ADP-D-ribose + nicotinamide + L-lysyl-[protein]. It catalyses the reaction N(6)-succinyl-L-lysyl-[protein] + NAD(+) + H2O = 2''-O-succinyl-ADP-D-ribose + nicotinamide + L-lysyl-[protein]. Its function is as follows. NAD-dependent lysine deacetylase and desuccinylase that specifically removes acetyl and succinyl groups on target proteins. Modulates the activities of several proteins which are inactive in their acylated form. Deacetylates the N-terminal lysine residue of Alba, the major archaeal chromatin protein and that, in turn, increases Alba's DNA binding affinity, thereby repressing transcription. The sequence is that of NAD-dependent protein deacylase from Aeropyrum pernix (strain ATCC 700893 / DSM 11879 / JCM 9820 / NBRC 100138 / K1).